The primary structure comprises 589 residues: Transcription factor MYC4 (589 aa).

Residues 99–150 form a JAZ-interaction domain region; the sequence is NTVLLGWGDGYYKGEEEKSRKKKSNPASAAEQEHRKRVIRELNSLISGGVGG. 4 disordered regions span residues 114–133, 291–326, 340–359, and 381–422; these read EEKSRKKKSNPASAAEQEHR, AAPVMNNGGNDSTSNSDSQPISKLCNGSSVENPNPK, IENGQEEDSSNKKRSPVSNN, and ASVA…EAER. Residues 296-308 show a composition bias toward low complexity; sequence NNGGNDSTSNSDS. The segment covering 309 to 322 has biased composition (polar residues); the sequence is QPISKLCNGSSVEN. Basic and acidic residues predominate over residues 381 to 398; it reads ASVAKEAESNRVVVEPEK. Positions 399–408 are enriched in basic residues; sequence KPRKRGRKPA. Basic and acidic residues predominate over residues 409–422; that stretch reads NGREEPLNHVEAER. Residues 412-461 enclose the bHLH domain; it reads EEPLNHVEAERQRREKLNQRFYSLRAVVPNVSKMDKASLLGDAISYISEL.

As to quaternary structure, homo- and heterodimer. Interacts with MYB28, MYB29, MYB34, MYB51, MYB76, MYB122, MYC3, AFPH2/NINJA and the JAZ repressors TIFY10A/JAZ1, TIFY10B/JAZ2, TIFY6B/JAZ3, TIFY6A/JAZ4, TIFY11A/JAZ5, TIFY11B/JAZ6, TIFY5B/JAZ7, TIFY5A/JAZ8, TIFY7/JAZ9, TIFY9/JAZ10, TIFY3A/JAZ11 and TIFY3B/JAZ12. As to expression, expressed constitutively at low levels. Preferentially expressed in vascular tissues.

It localises to the nucleus. Functionally, transcription factor involved in jasmonic acid (JA) gene regulation. With MYC2 and MYC3, controls additively subsets of JA-dependent responses. Can form complexes with all known glucosinolate-related MYBs to regulate glucosinolate biosynthesis. Binds to the G-box (5'-CACGTG-3') of promoters. Activates multiple TIFY/JAZ promoters. The protein is Transcription factor MYC4 (MYC4) of Arabidopsis thaliana (Mouse-ear cress).